A 564-amino-acid polypeptide reads, in one-letter code: Formate--tetrahydrofolate ligase (564 aa).

65–72 (TPLGEGKT) serves as a coordination point for ATP.

It belongs to the formate--tetrahydrofolate ligase family.

The catalysed reaction is (6S)-5,6,7,8-tetrahydrofolate + formate + ATP = (6R)-10-formyltetrahydrofolate + ADP + phosphate. The protein operates within one-carbon metabolism; tetrahydrofolate interconversion. The protein is Formate--tetrahydrofolate ligase of Roseiflexus castenholzii (strain DSM 13941 / HLO8).